Reading from the N-terminus, the 326-residue chain is ATP synthase subunit gamma, mitochondrial (326 aa).

The N-terminal 45 residues, methionine 1–serine 45, are a transit peptide targeting the mitochondrion.

It belongs to the ATPase gamma chain family. As to quaternary structure, F-type ATPases have 2 components, CF(1) - the catalytic core - and CF(0) - the membrane proton channel. CF(1) has five subunits: alpha(3), beta(3), gamma(1), delta(1), epsilon(1). CF(0) has three main subunits: a, b and c.

Its subcellular location is the mitochondrion. It localises to the mitochondrion inner membrane. In terms of biological role, mitochondrial membrane ATP synthase (F(1)F(0) ATP synthase or Complex V) produces ATP from ADP in the presence of a proton gradient across the membrane which is generated by electron transport complexes of the respiratory chain. F-type ATPases consist of two structural domains, F(1) - containing the extramembraneous catalytic core, and F(0) - containing the membrane proton channel, linked together by a central stalk and a peripheral stalk. During catalysis, ATP synthesis in the catalytic domain of F(1) is coupled via a rotary mechanism of the central stalk subunits to proton translocation. Part of the complex F(1) domain and the central stalk which is part of the complex rotary element. The gamma subunit protrudes into the catalytic domain formed of alpha(3)beta(3). Rotation of the central stalk against the surrounding alpha(3)beta(3) subunits leads to hydrolysis of ATP in three separate catalytic sites on the beta subunits. The chain is ATP synthase subunit gamma, mitochondrial (ATPC) from Ipomoea batatas (Sweet potato).